The chain runs to 200 residues: GMP synthase [glutamine-hydrolyzing] subunit A (200 aa).

Residues Lys-3–Ile-193 form the Glutamine amidotransferase type-1 domain. Cys-80 (nucleophile) is an active-site residue. Active-site residues include His-167 and Glu-169.

In terms of assembly, heterodimer composed of a glutamine amidotransferase subunit (A) and a GMP-binding subunit (B).

The catalysed reaction is XMP + L-glutamine + ATP + H2O = GMP + L-glutamate + AMP + diphosphate + 2 H(+). It functions in the pathway purine metabolism; GMP biosynthesis; GMP from XMP (L-Gln route): step 1/1. Functionally, catalyzes the synthesis of GMP from XMP. The protein is GMP synthase [glutamine-hydrolyzing] subunit A of Thermoplasma acidophilum (strain ATCC 25905 / DSM 1728 / JCM 9062 / NBRC 15155 / AMRC-C165).